A 205-amino-acid polypeptide reads, in one-letter code: Ypt/Rab-type GTPase Rab7 (205 aa).

GTP is bound by residues 17 to 23, 33 to 40, glycine 66, 125 to 128, and 157 to 159; these read SGVGKTS, FSASYKAT, NKID, and SAK. The short motif at 37–45 is the Effector region element; that stretch reads YKATIGADF. 2 S-geranylgeranyl cysteine lipidation sites follow: cysteine 203 and cysteine 205. Cysteine 205 carries the post-translational modification Cysteine methyl ester.

Belongs to the small GTPase superfamily. Rab family.

It localises to the cell membrane. With respect to regulation, alternates between an inactive form bound to GDP and an active form bound to GTP. Activated by guanine nucleotide-exchange factors (GEFs), and inactivated by GTPase-activating proteins (GAPs). Functionally, ypt/Rab-type GTPases are key regulators of membrane trafficking and intracellular vesicular transport. They act as molecular switches that convert between GTP-bound and GDP-bound states, and regulate virtually all steps of membrane traffic from the formation of the transport vesicle at the donor membrane to its fusion at the target membrane. In the GDP-bound state, Ypt proteins are predominantly cytosolic, solubilized through the interaction with a GDP dissociation inhibitor (GDI). In the GTP-bound state, the proteins are membrane bound and interact with specific effector proteins that select cargo, promote vesicle movement, or verify the correct site of fusion. This is Ypt/Rab-type GTPase Rab7 (gtp-14) from Neurospora crassa (strain ATCC 24698 / 74-OR23-1A / CBS 708.71 / DSM 1257 / FGSC 987).